The following is an 86-amino-acid chain: Colicin-E2 immunity protein (86 aa).

This sequence belongs to the colicins ColE2/ColE8/ColE9 and pyocins S1/S2 family.

This protein is able to protect a cell, which harbors the plasmid ColE2 encoding colicin E2, against colicin E2. This is Colicin-E2 immunity protein (imm) from Escherichia coli.